Reading from the N-terminus, the 236-residue chain is Ribosome assembly factor mrt4 (236 aa).

The protein belongs to the universal ribosomal protein uL10 family. In terms of assembly, associates with the pre-60S ribosomal particle.

It localises to the nucleus. It is found in the nucleolus. The protein resides in the cytoplasm. Its function is as follows. Component of the ribosome assembly machinery. Nuclear paralog of the ribosomal protein P0, it binds pre-60S subunits at an early stage of assembly in the nucleolus, and is replaced by P0 in cytoplasmic pre-60S subunits and mature 80S ribosomes. This is Ribosome assembly factor mrt4 from Eremothecium gossypii (strain ATCC 10895 / CBS 109.51 / FGSC 9923 / NRRL Y-1056) (Yeast).